Reading from the N-terminus, the 79-residue chain is Protein OPG081 (79 aa).

At 1 to 8 (MVDAITVL) the chain is on the intravirion side. The helical transmembrane segment at 9-29 (TAIGITVLMLLMVISGAAMIV) threads the bilayer. Residues 30–47 (KELNPNDIFTMQSLKFNR) are Virion surface-facing. Residues 48–68 (AVTIFKYIGLFIYIPGTIILY) traverse the membrane as a helical segment. Residues 69–79 (ATYVKSLLMKS) lie on the Intravirion side of the membrane.

Belongs to the orthopoxvirus OPG081 family.

The protein resides in the virion membrane. In terms of biological role, envelope protein. The protein is Protein OPG081 (OPG081) of Vaccinia virus (strain Copenhagen) (VACV).